The sequence spans 257 residues: Adenylate kinase (257 aa).

An ATP-binding site is contributed by 52 to 57; sequence GAGKGT. The NMP stretch occupies residues 72-101; the sequence is ATGDMLRSQVAKKTELGKEAKKIMDQGGLV. AMP-binding positions include T73, R78, 99–101, 128–131, and Q135; these read GLV and GFPR. The tract at residues 169–206 is LID; the sequence is GRLVHPASGRSYHKIFNPPKNEMLDDITGEPLIQRSDD. ATP contacts are provided by residues R170 and 179–180; that span reads SY. AMP is bound by residues R203 and R214. An ATP-binding site is contributed by Q242.

Belongs to the adenylate kinase family. AK2 subfamily. Monomer.

It is found in the cytoplasm. The protein localises to the cytosol. It localises to the mitochondrion intermembrane space. It carries out the reaction AMP + ATP = 2 ADP. Functionally, catalyzes the reversible transfer of the terminal phosphate group between ATP and AMP. Plays an important role in cellular energy homeostasis and in adenine nucleotide metabolism. Adenylate kinase activity is critical for regulation of the phosphate utilization and the AMP de novo biosynthesis pathways. This Aspergillus clavatus (strain ATCC 1007 / CBS 513.65 / DSM 816 / NCTC 3887 / NRRL 1 / QM 1276 / 107) protein is Adenylate kinase (adk1).